The chain runs to 565 residues: Pentatricopeptide repeat-containing protein At3g20730 (565 aa).

14 PPR repeats span residues 12–46, 47–77, 78–112, 113–147, 148–178, 179–213, 214–248, 249–279, 280–315, 316–351, 352–382, 383–417, 418–448, and 454–484; these read SPSLYLKALKLCSYQNVKKQLLLIHGNSITNGFCS, NLQLKDMLIDLYLKQGDVKHARKLFDRISKR, DVVSWTAMISRFSRCGYHPDALLLFKEMHREDVKA, NQFTYGSVLKSCKDLGCLKEGMQIHGSVEKGNCAG, NLIVRSALLSLYARCGKMEEARLQFDSMKER, DLVSWNAMIDGYTANACADTSFSLFQLMLTEGKKP, DCFTFGSLLRASIVVKCLEIVSELHGLAIKLGFGR, SSALIRSLVNAYVKCGSLANAWKLHEGTKKR, DLLSCTALITGFSQQNNCTSDAFDIFKDMIRMKTKM, DEVVVSSMLKICTTIASVTIGRQIHGFALKSSQIRF, DVALGNSLIDMYAKSGEIEDAVLAFEEMKEK, DVRSWTSLIAGYGRHGNFEKAIDLYNRMEHERIKP, NDVTFLSLLSACSHTGQTELGWKIYDTMINK, and REEHLSCIIDMLARSGYLEEAYALIRSKEGI. The type E motif; degenerate stretch occupies residues 491-565; that stretch reads TWGAFLDACR…NKAPGYSLVY (75 aa).

It belongs to the PPR family. PCMP-E subfamily.

The protein is Pentatricopeptide repeat-containing protein At3g20730 (PCMP-E94) of Arabidopsis thaliana (Mouse-ear cress).